The following is a 411-amino-acid chain: Translation initiation factor 2 subunit gamma (411 aa).

A tr-type G domain is found at 9–201 (QPTVNIGMVG…AIEKYIPTPE (193 aa)). The G1 stretch occupies residues 18–25 (GHVDHGKS). Mg(2+) is bound by residues Asp-21, Ser-25, Gly-46, and Ser-48. Position 21-26 (21-26 (DHGKST)) interacts with GTP. The tract at residues 46–50 (GISIK) is G2. A G3 region spans residues 88–91 (DAPG). GTP is bound by residues 144 to 147 (NKID) and 179 to 181 (SAY). The G4 stretch occupies residues 144 to 147 (NKID). The interval 179–181 (SAY) is G5.

Belongs to the TRAFAC class translation factor GTPase superfamily. Classic translation factor GTPase family. EIF2G subfamily. In terms of assembly, heterotrimer composed of an alpha, a beta and a gamma chain. It depends on Mg(2+) as a cofactor.

The catalysed reaction is GTP + H2O = GDP + phosphate + H(+). Its function is as follows. eIF-2 functions in the early steps of protein synthesis by forming a ternary complex with GTP and initiator tRNA. This Thermoplasma volcanium (strain ATCC 51530 / DSM 4299 / JCM 9571 / NBRC 15438 / GSS1) protein is Translation initiation factor 2 subunit gamma.